A 74-amino-acid polypeptide reads, in one-letter code: DNA-directed RNA polymerase subunit omega (74 aa).

This sequence belongs to the RNA polymerase subunit omega family. The RNAP catalytic core consists of 2 alpha, 1 beta/beta' and 1 omega subunit. When a sigma factor is associated with the core the holoenzyme is formed, which can initiate transcription.

It catalyses the reaction RNA(n) + a ribonucleoside 5'-triphosphate = RNA(n+1) + diphosphate. Promotes RNA polymerase assembly. Latches the N- and C-terminal regions of the beta' subunit thereby facilitating its interaction with the beta and alpha subunits. The protein is DNA-directed RNA polymerase subunit omega of Helicobacter hepaticus (strain ATCC 51449 / 3B1).